Here is a 420-residue protein sequence, read N- to C-terminus: Riboflavin biosynthesis protein RibBA (420 aa).

Positions Met1–Arg202 are DHBP synthase. D-ribulose 5-phosphate is bound by residues Arg28–Glu29, Asp33, Arg141–Thr145, and Glu165. Glu29 contacts Mg(2+). Position 144 (His144) interacts with Mg(2+). The tract at residues Thr203 to Ala420 is GTP cyclohydrolase II. Arg253–Glu257 provides a ligand contact to GTP. Residues Cys258, Cys269, and Cys271 each coordinate Zn(2+). GTP contacts are provided by residues Gln274, Glu297–Arg299, and Thr319. The Proton acceptor; for GTP cyclohydrolase activity role is filled by Asp331. Arg333 acts as the Nucleophile; for GTP cyclohydrolase activity in catalysis. The GTP site is built by Thr354 and Lys359.

This sequence in the N-terminal section; belongs to the DHBP synthase family. It in the C-terminal section; belongs to the GTP cyclohydrolase II family. It depends on Mg(2+) as a cofactor. Mn(2+) serves as cofactor. Requires Zn(2+) as cofactor.

It catalyses the reaction D-ribulose 5-phosphate = (2S)-2-hydroxy-3-oxobutyl phosphate + formate + H(+). It carries out the reaction GTP + 4 H2O = 2,5-diamino-6-hydroxy-4-(5-phosphoribosylamino)-pyrimidine + formate + 2 phosphate + 3 H(+). It functions in the pathway cofactor biosynthesis; riboflavin biosynthesis; 2-hydroxy-3-oxobutyl phosphate from D-ribulose 5-phosphate: step 1/1. It participates in cofactor biosynthesis; riboflavin biosynthesis; 5-amino-6-(D-ribitylamino)uracil from GTP: step 1/4. In terms of biological role, catalyzes the conversion of D-ribulose 5-phosphate to formate and 3,4-dihydroxy-2-butanone 4-phosphate. Functionally, catalyzes the conversion of GTP to 2,5-diamino-6-ribosylamino-4(3H)-pyrimidinone 5'-phosphate (DARP), formate and pyrophosphate. This chain is Riboflavin biosynthesis protein RibBA, found in Salinispora arenicola (strain CNS-205).